A 317-amino-acid chain; its full sequence is Methionyl-tRNA formyltransferase (317 aa).

112–115 (SILP) is a (6S)-5,6,7,8-tetrahydrofolate binding site.

Belongs to the Fmt family.

It catalyses the reaction L-methionyl-tRNA(fMet) + (6R)-10-formyltetrahydrofolate = N-formyl-L-methionyl-tRNA(fMet) + (6S)-5,6,7,8-tetrahydrofolate + H(+). In terms of biological role, attaches a formyl group to the free amino group of methionyl-tRNA(fMet). The formyl group appears to play a dual role in the initiator identity of N-formylmethionyl-tRNA by promoting its recognition by IF2 and preventing the misappropriation of this tRNA by the elongation apparatus. The chain is Methionyl-tRNA formyltransferase from Actinobacillus succinogenes (strain ATCC 55618 / DSM 22257 / CCUG 43843 / 130Z).